We begin with the raw amino-acid sequence, 360 residues long: Chorismate synthase (360 aa).

NADP(+) is bound at residue Arg47. Residues 124-126 (RAS), Gly286, 301-305 (KPTAT), and Arg327 each bind FMN.

The protein belongs to the chorismate synthase family. In terms of assembly, homotetramer. FMNH2 is required as a cofactor.

It carries out the reaction 5-O-(1-carboxyvinyl)-3-phosphoshikimate = chorismate + phosphate. It functions in the pathway metabolic intermediate biosynthesis; chorismate biosynthesis; chorismate from D-erythrose 4-phosphate and phosphoenolpyruvate: step 7/7. Catalyzes the anti-1,4-elimination of the C-3 phosphate and the C-6 proR hydrogen from 5-enolpyruvylshikimate-3-phosphate (EPSP) to yield chorismate, which is the branch point compound that serves as the starting substrate for the three terminal pathways of aromatic amino acid biosynthesis. This reaction introduces a second double bond into the aromatic ring system. The protein is Chorismate synthase of Synechococcus sp. (strain RCC307).